The sequence spans 268 residues: MEMO1 family protein Ta0237 (268 aa).

It belongs to the MEMO1 family.

This chain is MEMO1 family protein Ta0237, found in Thermoplasma acidophilum (strain ATCC 25905 / DSM 1728 / JCM 9062 / NBRC 15155 / AMRC-C165).